Reading from the N-terminus, the 1256-residue chain is N-acetylglucosamine-1-phosphotransferase subunits alpha/beta (1256 aa).

The chain crosses the membrane as a helical span at residues 22–42 (VCFLGVVVTIVSAFQFGEVVL). N-linked (GlcNAc...) asparagine glycosylation is found at asparagine 83, asparagine 114, asparagine 148, asparagine 179, and asparagine 250. 4 cysteine pairs are disulfide-bonded: cysteine 438/cysteine 461, cysteine 452/cysteine 468, cysteine 505/cysteine 528, and cysteine 519/cysteine 535. 2 LNR repeats span residues 438–473 (CAEG…GNSG) and 505–545 (CNQG…ELYK). Residues aspartate 449, aspartate 464, aspartate 467, aspartate 516, aspartate 531, and aspartate 534 each coordinate Ca(2+). Residues asparagine 614, asparagine 699, asparagine 729, asparagine 829, and asparagine 1009 are each glycosylated (N-linked (GlcNAc...) asparagine). Residues 699 to 798 (NISLLPKDAQ…TFPAVSVKVN (100 aa)) form the DMAP1-binding domain. Residues 1005-1040 (VQPLNISQVFDEVDTDQSGVLSDREIRTLATRIHEL) enclose the EF-hand domain. Ca(2+)-binding residues include aspartate 1018, aspartate 1020, serine 1022, and glutamate 1029. N-linked (GlcNAc...) asparagine glycosylation is present at asparagine 1129. The helical transmembrane segment at 1215–1235 (VLATLIMFTIFSFFAEQLIAL) threads the bilayer.

The protein belongs to the stealth family. Hexamer of two alpha, two beta and two gamma (GNPTG) subunits; disulfide-linked. The alpha and/or the beta subunits of the enzyme constitute the catalytic subunits. Interacts with LYSET; facilitates proper localization of GNPTAB. Post-translationally, the alpha- and beta-subunits are generated by a proteolytic cleavage by MBTPS1 protease at the Lys-928-Asp-929 bond. As to expression, expressed in the heart, whole brain, placenta, lung, liver, skeletal muscle, kidney and pancreas.

The protein localises to the golgi apparatus membrane. It carries out the reaction N(4)-[alpha-D-mannosyl-(1-&gt;2)-alpha-D-mannosyl-(glycan)]-L-asparaginyl-[protein] + UDP-N-acetyl-alpha-D-glucosamine = N(4)-[6-(N-acetyl-alpha-D-glucosaminyl-1-phospho)-alpha-D-mannosyl-(1-&gt;2)-alpha-D-mannosyl-(glycan)]-L-asparaginyl-[protein] + UMP + H(+). In terms of biological role, catalyzes the formation of mannose 6-phosphate (M6P) markers on high mannose type oligosaccharides in the Golgi apparatus. M6P residues are required to bind to the M6P receptors (MPR), which mediate the vesicular transport of lysosomal enzymes to the endosomal/prelysosomal compartment. In Homo sapiens (Human), this protein is N-acetylglucosamine-1-phosphotransferase subunits alpha/beta (GNPTAB).